Here is a 115-residue protein sequence, read N- to C-terminus: MPNYHVTLQAAYIVRNVDDVEDAISVTISQIGKMLNKEGLNYVDIDIGLTICPKCGELVDCVLVVARTALVGVLLSMKVFNAESPEHAIRIAKATIGKVLKNIPLEPVDVVELEK.

This sequence belongs to the UPF0212 family.

The polypeptide is UPF0212 protein MJ0068 (Methanocaldococcus jannaschii (strain ATCC 43067 / DSM 2661 / JAL-1 / JCM 10045 / NBRC 100440) (Methanococcus jannaschii)).